A 246-amino-acid chain; its full sequence is E3 ubiquitin-protein ligase MARCHF2 (246 aa).

The segment at 56-116 (GTQSDGPICR…ELCHTEFAVE (61 aa)) adopts an RING-CH-type zinc-finger fold. Residues cysteine 64, cysteine 67, cysteine 80, cysteine 82, histidine 90, cysteine 93, cysteine 106, and cysteine 109 each coordinate Zn(2+). The next 2 helical transmembrane spans lie at 138 to 158 (LFCD…SGWL) and 175 to 195 (AVGL…WTLV).

The protein resides in the endoplasmic reticulum membrane. It localises to the lysosome membrane. It is found in the endosome membrane. It carries out the reaction S-ubiquitinyl-[E2 ubiquitin-conjugating enzyme]-L-cysteine + [acceptor protein]-L-lysine = [E2 ubiquitin-conjugating enzyme]-L-cysteine + N(6)-ubiquitinyl-[acceptor protein]-L-lysine.. It functions in the pathway protein modification; protein ubiquitination. E3 ubiquitin-protein ligase which may be involved in endosomal trafficking. E3 ubiquitin ligases accept ubiquitin from an E2 ubiquitin-conjugating enzyme in the form of a thioester and then directly transfer the ubiquitin to targeted substrates. This Xenopus tropicalis (Western clawed frog) protein is E3 ubiquitin-protein ligase MARCHF2 (marchf2).